The primary structure comprises 339 residues: Alpha-ketoglutarate-dependent dioxygenase btcD (339 aa).

Residue histidine 96 coordinates substrate. Fe cation contacts are provided by histidine 140 and aspartate 142. 2-oxoglutarate is bound at residue threonine 173. The tract at residues 207-230 (DGSDPKFQVPRGSPANVGTNLRPT) is disordered. Histidine 302 is a Fe cation binding site. Residues arginine 314 and arginine 318 each coordinate 2-oxoglutarate. Arginine 318 provides a ligand contact to substrate.

This sequence belongs to the TfdA dioxygenase family. Requires Fe(2+) as cofactor.

It functions in the pathway secondary metabolite biosynthesis; terpenoid biosynthesis. Its function is as follows. Alpha-ketoglutarate-dependent dioxygenase; part of the gene cluster that mediates the biosynthesis of betaestacins. The bifunctional terpene synthase btcA converts isopentenyl diphosphate (IPP) and dimethylallyl diphosphate (DMAPP) into the sesterterpene betaestacin I. The C-terminal prenyltransferase (PT) domain of btcA catalyzes formation of GFPP, whereas the N-terminal terpene cyclase (TC) domain catalyzes the cyclization of GFPP into betaestacin I. The cytochrome P450 monooxygenase btcB is then responsible for the six-step oxidation of betaestacin I to yield betaestacin II. The roles of the cytochrome P450 monooxygenase btcC and the alpha-ketoglutarate-dependent dioxygenase btcD have not been identified yet. This is Alpha-ketoglutarate-dependent dioxygenase btcD from Neocamarosporium betae (Beet black rot fungus).